The primary structure comprises 467 residues: ATP synthase subunit beta (467 aa).

Gly150–Thr157 is a binding site for ATP.

Belongs to the ATPase alpha/beta chains family. As to quaternary structure, F-type ATPases have 2 components, CF(1) - the catalytic core - and CF(0) - the membrane proton channel. CF(1) has five subunits: alpha(3), beta(3), gamma(1), delta(1), epsilon(1). CF(0) has three main subunits: a(1), b(2) and c(9-12). The alpha and beta chains form an alternating ring which encloses part of the gamma chain. CF(1) is attached to CF(0) by a central stalk formed by the gamma and epsilon chains, while a peripheral stalk is formed by the delta and b chains.

It is found in the cell inner membrane. It carries out the reaction ATP + H2O + 4 H(+)(in) = ADP + phosphate + 5 H(+)(out). Produces ATP from ADP in the presence of a proton gradient across the membrane. The catalytic sites are hosted primarily by the beta subunits. The chain is ATP synthase subunit beta from Aliivibrio salmonicida (strain LFI1238) (Vibrio salmonicida (strain LFI1238)).